The primary structure comprises 130 residues: Small ribosomal subunit protein uS9 (130 aa).

The protein belongs to the universal ribosomal protein uS9 family.

The polypeptide is Small ribosomal subunit protein uS9 (Bacillus licheniformis (strain ATCC 14580 / DSM 13 / JCM 2505 / CCUG 7422 / NBRC 12200 / NCIMB 9375 / NCTC 10341 / NRRL NRS-1264 / Gibson 46)).